The primary structure comprises 394 residues: Elongation factor Tu (394 aa).

Residues 10 to 205 (KPHMNVGTIG…TMDNYFDLPE (196 aa)) enclose the tr-type G domain. Residues 19–26 (GHVDHGKT) are G1. 19-26 (GHVDHGKT) contributes to the GTP binding site. Position 26 (Thr26) interacts with Mg(2+). Positions 61–65 (GITIN) are G2. The G3 stretch occupies residues 82-85 (DCPG). Residues 82–86 (DCPGH) and 137–140 (NKLD) each bind GTP. The G4 stretch occupies residues 137–140 (NKLD). Residues 173–175 (SAF) are G5.

It belongs to the TRAFAC class translation factor GTPase superfamily. Classic translation factor GTPase family. EF-Tu/EF-1A subfamily. As to quaternary structure, monomer.

The protein resides in the cytoplasm. The catalysed reaction is GTP + H2O = GDP + phosphate + H(+). GTP hydrolase that promotes the GTP-dependent binding of aminoacyl-tRNA to the A-site of ribosomes during protein biosynthesis. In Borrelia duttonii (strain Ly), this protein is Elongation factor Tu.